The primary structure comprises 192 residues: Casparian strip membrane protein 2 (192 aa).

The Cytoplasmic segment spans residues 1–31 (MTKDVVVEHGESSKAPLVAAPAASGVGRAAS). A helical transmembrane segment spans residues 32–52 (VADVFLRFLAIVGTIASAISM). The Extracellular segment spans residues 53-79 (GTTNETLPFFTQFIQFEAKYSDLPSFT). Asparagine 56 carries N-linked (GlcNAc...) asparagine glycosylation. A helical transmembrane segment spans residues 80–100 (FFVAANAVVCTYLVLSIPLSI). Topologically, residues 101-112 (VHIVRPRARYSR) are cytoplasmic. A helical transmembrane segment spans residues 113–133 (LVLVFFDAAMLTLLTAGASAA). Residues 134–166 (AAIVYLAHKGNVRANWFAICQQFDSFCERISGS) are Extracellular-facing. The helical transmembrane segment at 167-187 (LIGSFAAMVLLIMLIFLSAFA) threads the bilayer. At 188–192 (LARRH) the chain is on the cytoplasmic side.

Belongs to the Casparian strip membrane proteins (CASP) family. Homodimer and heterodimers.

The protein localises to the cell membrane. In terms of biological role, regulates membrane-cell wall junctions and localized cell wall deposition. Required for establishment of the Casparian strip membrane domain (CSD) and the subsequent formation of Casparian strips, a cell wall modification of the root endodermis that determines an apoplastic barrier between the intraorganismal apoplasm and the extraorganismal apoplasm and prevents lateral diffusion. The polypeptide is Casparian strip membrane protein 2 (Panicum virgatum (Blackwell switchgrass)).